The chain runs to 303 residues: Porphobilinogen deaminase (303 aa).

Cys240 bears the S-(dipyrrolylmethanemethyl)cysteine mark.

Belongs to the HMBS family. Monomer. Dipyrromethane is required as a cofactor.

It carries out the reaction 4 porphobilinogen + H2O = hydroxymethylbilane + 4 NH4(+). Its pathway is porphyrin-containing compound metabolism; protoporphyrin-IX biosynthesis; coproporphyrinogen-III from 5-aminolevulinate: step 2/4. In terms of biological role, tetrapolymerization of the monopyrrole PBG into the hydroxymethylbilane pre-uroporphyrinogen in several discrete steps. The sequence is that of Porphobilinogen deaminase from Stenotrophomonas maltophilia (strain K279a).